A 307-amino-acid polypeptide reads, in one-letter code: Oxygen-dependent coproporphyrinogen-III oxidase (307 aa).

S99 provides a ligand contact to substrate. 2 residues coordinate a divalent metal cation: H103 and H113. The active-site Proton donor is the H113. A substrate-binding site is contributed by 115–117 (NVR). A divalent metal cation-binding residues include H152 and H182. The interval 247-282 (YVEFNLVFDRGTLFGLQSGGRTESILMSMPPVANWR) is important for dimerization. Substrate is bound at residue 265–267 (GGR).

It belongs to the aerobic coproporphyrinogen-III oxidase family. Homodimer. A divalent metal cation serves as cofactor.

Its subcellular location is the cytoplasm. It carries out the reaction coproporphyrinogen III + O2 + 2 H(+) = protoporphyrinogen IX + 2 CO2 + 2 H2O. It functions in the pathway porphyrin-containing compound metabolism; protoporphyrin-IX biosynthesis; protoporphyrinogen-IX from coproporphyrinogen-III (O2 route): step 1/1. In terms of biological role, involved in the heme biosynthesis. Catalyzes the aerobic oxidative decarboxylation of propionate groups of rings A and B of coproporphyrinogen-III to yield the vinyl groups in protoporphyrinogen-IX. In Burkholderia orbicola (strain MC0-3), this protein is Oxygen-dependent coproporphyrinogen-III oxidase.